The chain runs to 456 residues: tRNA modification GTPase MnmE (456 aa).

Arg-24, Glu-81, and Lys-120 together coordinate (6S)-5-formyl-5,6,7,8-tetrahydrofolate. The 164-residue stretch at 216-379 (GMTVVIAGRP…LRDHLKACMG (164 aa)) folds into the TrmE-type G domain. K(+) is bound at residue Asn-226. Residues 226-231 (NAGKSS), 245-251 (TAIAGTT), 270-273 (DTAG), and 335-338 (NKAD) each bind GTP. Ser-230 serves as a coordination point for Mg(2+). 3 residues coordinate K(+): Thr-245, Ile-247, and Thr-250. A Mg(2+)-binding site is contributed by Thr-251. Lys-456 contributes to the (6S)-5-formyl-5,6,7,8-tetrahydrofolate binding site.

It belongs to the TRAFAC class TrmE-Era-EngA-EngB-Septin-like GTPase superfamily. TrmE GTPase family. Homodimer. Heterotetramer of two MnmE and two MnmG subunits. The cofactor is K(+).

Its subcellular location is the cytoplasm. Its function is as follows. Exhibits a very high intrinsic GTPase hydrolysis rate. Involved in the addition of a carboxymethylaminomethyl (cmnm) group at the wobble position (U34) of certain tRNAs, forming tRNA-cmnm(5)s(2)U34. The polypeptide is tRNA modification GTPase MnmE (Pseudomonas putida (strain W619)).